The sequence spans 320 residues: Ferrochelatase (320 aa).

2 residues coordinate Fe cation: His-194 and Glu-275.

It belongs to the ferrochelatase family. As to quaternary structure, monomer.

The protein resides in the cytoplasm. It catalyses the reaction heme b + 2 H(+) = protoporphyrin IX + Fe(2+). It functions in the pathway porphyrin-containing compound metabolism; protoheme biosynthesis; protoheme from protoporphyrin-IX: step 1/1. Functionally, catalyzes the ferrous insertion into protoporphyrin IX. The protein is Ferrochelatase of Escherichia coli O139:H28 (strain E24377A / ETEC).